Reading from the N-terminus, the 397-residue chain is 4-hydroxyphenylpyruvate dioxygenase (397 aa).

VOC domains follow at residues 18–149 (NFHH…FVEY) and 181–339 (FIDH…IFTK). 3 residues coordinate Fe cation: histidine 184, histidine 267, and glutamate 350.

This sequence belongs to the 4HPPD family. Homodimer. The cofactor is Fe cation.

It is found in the cytoplasm. The protein resides in the endoplasmic reticulum membrane. The protein localises to the golgi apparatus membrane. It carries out the reaction 3-(4-hydroxyphenyl)pyruvate + O2 = homogentisate + CO2. It functions in the pathway amino-acid degradation; L-phenylalanine degradation; acetoacetate and fumarate from L-phenylalanine: step 3/6. Its function is as follows. Catalyzes the conversion of 4-hydroxyphenylpyruvic acid to homogentisic acid, one of the steps in tyrosine catabolism. This is 4-hydroxyphenylpyruvate dioxygenase (hpd) from Danio rerio (Zebrafish).